The following is a 460-amino-acid chain: Serine--tRNA ligase (460 aa).

242–244 provides a ligand contact to L-serine; it reads TAE. ATP-binding positions include 273–275 and V289; that span reads RRE. E296 serves as a coordination point for L-serine. Residue 369 to 372 participates in ATP binding; it reads EVSS. S405 serves as a coordination point for L-serine.

Belongs to the class-II aminoacyl-tRNA synthetase family. Type-1 seryl-tRNA synthetase subfamily. In terms of assembly, homodimer. The tRNA molecule binds across the dimer.

The protein resides in the cytoplasm. It catalyses the reaction tRNA(Ser) + L-serine + ATP = L-seryl-tRNA(Ser) + AMP + diphosphate + H(+). The catalysed reaction is tRNA(Sec) + L-serine + ATP = L-seryl-tRNA(Sec) + AMP + diphosphate + H(+). It participates in aminoacyl-tRNA biosynthesis; selenocysteinyl-tRNA(Sec) biosynthesis; L-seryl-tRNA(Sec) from L-serine and tRNA(Sec): step 1/1. Catalyzes the attachment of serine to tRNA(Ser). Is also able to aminoacylate tRNA(Sec) with serine, to form the misacylated tRNA L-seryl-tRNA(Sec), which will be further converted into selenocysteinyl-tRNA(Sec). The protein is Serine--tRNA ligase of Haloquadratum walsbyi (strain DSM 16790 / HBSQ001).